The chain runs to 792 residues: Phenylalanine--tRNA ligase beta subunit (792 aa).

Residues 39–147 (GESLGQVVVA…DDAPVGQALA (109 aa)) enclose the tRNA-binding domain. The 76-residue stretch at 400-475 (PQPVHIRLRR…RIHGYDRVPT (76 aa)) folds into the B5 domain. Positions 453, 459, 462, and 463 each coordinate Mg(2+). Residues 698–791 (SRFPSVRRDL…IEREHRARIR (94 aa)) form the FDX-ACB domain.

It belongs to the phenylalanyl-tRNA synthetase beta subunit family. Type 1 subfamily. As to quaternary structure, tetramer of two alpha and two beta subunits. The cofactor is Mg(2+).

Its subcellular location is the cytoplasm. The catalysed reaction is tRNA(Phe) + L-phenylalanine + ATP = L-phenylalanyl-tRNA(Phe) + AMP + diphosphate + H(+). In Xanthomonas axonopodis pv. citri (strain 306), this protein is Phenylalanine--tRNA ligase beta subunit.